The primary structure comprises 120 residues: Piercer of microtubule wall 2 protein (120 aa).

Positions M1–S10 are enriched in basic and acidic residues. The disordered stretch occupies residues M1 to P25.

Belongs to the PIERCE2 family. In terms of assembly, microtubule inner protein component of sperm flagellar doublet microtubules. Interacts with CFAP53, ODAD1 and ODAD3; the interactions link the outer dynein arms docking complex (ODA-DC) to the internal microtubule inner proteins (MIP) in cilium axoneme. Expressed in trachea multiciliated cells.

The protein resides in the cytoplasm. It localises to the cytoskeleton. It is found in the cilium axoneme. The protein localises to the flagellum axoneme. Its function is as follows. Microtubule inner protein involved in the attachment of outer dynein arms (ODAs) to dynein-decorated doublet microtubules (DMTs) in cilia axoneme, which is required for motile cilia beating. The chain is Piercer of microtubule wall 2 protein (PIERCE2) from Bos taurus (Bovine).